Here is a 902-residue protein sequence, read N- to C-terminus: Protein translocase subunit SecA (902 aa).

Residues Gln-89, 107 to 111, and Asp-502 contribute to the ATP site; that span reads GEGKT. Zn(2+)-binding residues include Cys-884, Cys-886, Cys-895, and His-896.

This sequence belongs to the SecA family. Monomer and homodimer. Part of the essential Sec protein translocation apparatus which comprises SecA, SecYEG and auxiliary proteins SecDF-YajC and YidC. The cofactor is Zn(2+).

The protein resides in the cell inner membrane. The protein localises to the cytoplasm. The catalysed reaction is ATP + H2O + cellular proteinSide 1 = ADP + phosphate + cellular proteinSide 2.. Part of the Sec protein translocase complex. Interacts with the SecYEG preprotein conducting channel. Has a central role in coupling the hydrolysis of ATP to the transfer of proteins into and across the cell membrane, serving both as a receptor for the preprotein-SecB complex and as an ATP-driven molecular motor driving the stepwise translocation of polypeptide chains across the membrane. The protein is Protein translocase subunit SecA of Agrobacterium fabrum (strain C58 / ATCC 33970) (Agrobacterium tumefaciens (strain C58)).